A 226-amino-acid polypeptide reads, in one-letter code: UPF0758 protein SPJ_1027 (226 aa).

Residues 103-225 (SILSSQKLAK…YFSYREKTDL (123 aa)) enclose the MPN domain. Zn(2+) contacts are provided by His174, His176, and Asp187. The JAMM motif motif lies at 174 to 187 (HNHPSGAVAPSQND).

It belongs to the UPF0758 family.

The protein is UPF0758 protein SPJ_1027 of Streptococcus pneumoniae (strain JJA).